Reading from the N-terminus, the 180-residue chain is Telokin-like protein 20 (180 aa).

The disordered stretch occupies residues Ser-112 to Asp-180. A compositionally biased stretch (acidic residues) spans Asp-156–Asp-165.

This is Telokin-like protein 20 (TLP20) from Lepidoptera (butterflies and moths).